Reading from the N-terminus, the 781-residue chain is MAFNPPVIRAFSQPAFTYVFKFPYPQWKEKEWLLHALLAHGTEQSMIQLRNCAPHPDEDIIRDDLLISLEDRHFGAVLCKAVYMATTTLMSHKQRNMFPRCDIIVQSELGEKNLHCHIIVGGEGLSKRNAKSSCAQFYGLILAEIIQRCKSLLATRPFEPEEADIFHTLKKAEREAWGGVTGGNMQILQYRDRRGDLHAQTVDPLRFFKNYLLPKNRCISSYSKPDVCTSPDNWFILAEKTYSHTLINGLPLPEHYRKNYHATLDNEVIPGPQTMAYGGRGPWEHLPEVGDQRLAASSVSTTYKPNKKEKLMLNLLDKCKELNLLVYEDLVANCPELLLMLEGQPGGARLIEQVLGMHHINVCSNFTALTYLFHLHPVTSLDSDNKALQLLLIQGYNPLAVGHALCCVLNKQFGKQNTVCFYGPASTGKTNMAKAIVQGIRLYGCVNHLNKGFVFNDCRQRLVVWWEECLMHQDWVEPAKCILGGTECRIDVKHRDSVLLTQTPVIISTNHDIYAVVGGNSVSHVHAAPLKERVIQLNFMKQLPQTFGEITATEIAALLQWCFNEYDCTLTGFKQKWNLDKIPNSFPLGVLCPTHSQDFTLHENGYCTDCGGYLPHSADNSMYTDRASETSTGDITPSDLGDSDGEDTEPETSQVDYCPPKKRRLTAPASPPNSPASSVSTITFFNTWHAQPRDEDELREYERQASLLQKKRESRKRGEEETLADNSSQEQEPQPDPTQWGERLGFISSGTPNQPPIVLHCFEDLRPSDEDEGEYIGEKRQ.

The 261-residue stretch at 11–271 folds into the PV NS1-Nuc domain; sequence FSQPAFTYVF…ATLDNEVIPG (261 aa). Positions 108, 115, and 117 each coordinate a divalent metal cation. Positions 115-117 match the RCR-2 motif; it reads HCH. Positions 193–197 are ori-binding; it reads RRGDL. Tyrosine 211 functions as the For nuclease activity in the catalytic mechanism. The short motif at 211-215 is the RCR-3 element; that stretch reads YLLPK. The SF3 helicase domain maps to 397-552; sequence NPLAVGHALC…LPQTFGEITA (156 aa). 423–430 contributes to the ATP binding site; the sequence is GPASTGKT. The transactivation stretch occupies residues 606-781; the sequence is YCTDCGGYLP…EGEYIGEKRQ (176 aa). A compositionally biased stretch (polar residues) spans 621-635; it reads SMYTDRASETSTGDI. Disordered stretches follow at residues 621 to 679 and 709 to 781; these read SMYT…ASSV and QKKR…EKRQ. The segment covering 641–650 has biased composition (acidic residues); the sequence is GDSDGEDTEP.

This sequence belongs to the parvoviruses initiator protein NS1 family. Homooligomer; when bound to DNA. Requires Mg(2+) as cofactor.

It is found in the host nucleus. The catalysed reaction is ATP + H2O = ADP + phosphate + H(+). In terms of biological role, multifunctional protein which displays endonuclease and helicase activities required for initiating and directing viral DNA replication. Also plays a role in viral packaging and transactivation of several promoters. Binds site-specifically to 2-3 approximate tandem copies within the origins of replication (Ori), unwinds this hairpin region and nicks one DNA strand thereby initiating the rolling circle replication (RCR). Becomes covalently attached to the 5' end of the nick and provides a 3'OH for priming DNA synthesis. The helicase activity unwinds DNA in a 3'-5' direction on the longer strand. Participates in the transcriptional regulation of several promoters. The protein is Initiator protein NS1 (NS1) of Homo sapiens (Human).